The sequence spans 427 residues: Glutamate-1-semialdehyde 2,1-aminomutase (427 aa).

Position 265 is an N6-(pyridoxal phosphate)lysine (Lys265).

The protein belongs to the class-III pyridoxal-phosphate-dependent aminotransferase family. HemL subfamily. In terms of assembly, homodimer. Pyridoxal 5'-phosphate is required as a cofactor.

Its subcellular location is the cytoplasm. The catalysed reaction is (S)-4-amino-5-oxopentanoate = 5-aminolevulinate. Its pathway is porphyrin-containing compound metabolism; protoporphyrin-IX biosynthesis; 5-aminolevulinate from L-glutamyl-tRNA(Glu): step 2/2. This chain is Glutamate-1-semialdehyde 2,1-aminomutase, found in Pseudomonas fluorescens (strain Pf0-1).